Reading from the N-terminus, the 106-residue chain is UPF0145 protein CKL_2433 (106 aa).

Belongs to the UPF0145 family.

The polypeptide is UPF0145 protein CKL_2433 (Clostridium kluyveri (strain ATCC 8527 / DSM 555 / NBRC 12016 / NCIMB 10680 / K1)).